The sequence spans 293 residues: MSEKESPSPQHKKDEVVDDTEQETKDSEDDATKKMKIKEGSKFTMNSILSPLESLARVQQQLLKMAAAQSGFGGNGSGGNGANGFPYPARFATNCFSGPFPGYNGSQNWYNGNDARFAAAAALLPCAIDPVRSAINHQFSMSQRRKRRVLFSQAQVYELERRFKQAKYLTAPEREQLANSIRLTPTQVKIWFQNHRYKCKRQEKEKAMSGLGHGDDGCSPPPGDDDDDDDKYSIEMDDKDDEEEDGAKPMLKSNGVFGLPYPSPANAAAAAAAAAFNFQFGAQGPNPAYFMRW.

Composition is skewed to basic and acidic residues over residues 1–15 (MSEK…KKDE) and 22–38 (QETK…MKIK). 2 disordered regions span residues 1 to 38 (MSEK…MKIK) and 203 to 256 (EKEK…SNGV). The segment at residues 144–203 (RRKRRVLFSQAQVYELERRFKQAKYLTAPEREQLANSIRLTPTQVKIWFQNHRYKCKRQE) is a DNA-binding region (homeobox).

It belongs to the NK-2 homeobox family. In terms of tissue distribution, expressed in the 8 vulval muscles, 8-10 ventral neurons in the head and in the most posterior pharyngeal muscle cell, m8.

Its subcellular location is the nucleus. Probable transcriptional regulator that is required in neural development for the normal formation of sublateral cholinergic motor neuron processes. Plays a role in regulating the expression of acetylcholine transporter protein unc-17 in the sublateral processes. In particular, it is required in sublateral motor neurons for a left-right turning behavior that occurs during the lethargus phase of the normal sleep process called 'flipping'. During 'flipping' animals rotate 180 degrees about their longitudinal axis. In Caenorhabditis briggsae, this protein is Homeobox protein ceh-24.